The primary structure comprises 219 residues: Large ribosomal subunit protein uL3 (219 aa).

The tract at residues 113–142 (TTKGHGYQGNIHKDNQSRGPMAHGSRYHRR) is disordered.

Belongs to the universal ribosomal protein uL3 family. Part of the 50S ribosomal subunit. Forms a cluster with proteins L14 and L19.

Its function is as follows. One of the primary rRNA binding proteins, it binds directly near the 3'-end of the 23S rRNA, where it nucleates assembly of the 50S subunit. In Limosilactobacillus reuteri (strain DSM 20016) (Lactobacillus reuteri), this protein is Large ribosomal subunit protein uL3.